Reading from the N-terminus, the 72-residue chain is Translation initiation factor IF-1 (72 aa).

An S1-like domain is found at 1-72; the sequence is MAKEDVIEMQ…SKGRIVFRAR (72 aa).

Belongs to the IF-1 family. In terms of assembly, component of the 30S ribosomal translation pre-initiation complex which assembles on the 30S ribosome in the order IF-2 and IF-3, IF-1 and N-formylmethionyl-tRNA(fMet); mRNA recruitment can occur at any time during PIC assembly.

The protein resides in the cytoplasm. In terms of biological role, one of the essential components for the initiation of protein synthesis. Stabilizes the binding of IF-2 and IF-3 on the 30S subunit to which N-formylmethionyl-tRNA(fMet) subsequently binds. Helps modulate mRNA selection, yielding the 30S pre-initiation complex (PIC). Upon addition of the 50S ribosomal subunit IF-1, IF-2 and IF-3 are released leaving the mature 70S translation initiation complex. The sequence is that of Translation initiation factor IF-1 from Vibrio cholerae serotype O1 (strain ATCC 39541 / Classical Ogawa 395 / O395).